A 209-amino-acid polypeptide reads, in one-letter code: Redox-sensing transcriptional repressor Rex (209 aa).

The segment at residues 16-55 (LYYRFIQNLSLSGKQRVSSAELSEAVKVDSATIRRDFSYF) is a DNA-binding region (H-T-H motif). Position 90-95 (90-95 (GVGNLG)) interacts with NAD(+).

Belongs to the transcriptional regulatory Rex family. In terms of assembly, homodimer.

It is found in the cytoplasm. Modulates transcription in response to changes in cellular NADH/NAD(+) redox state. The protein is Redox-sensing transcriptional repressor Rex of Bacillus thuringiensis (strain Al Hakam).